A 262-amino-acid polypeptide reads, in one-letter code: Matrilysin (262 aa).

The signal sequence occupies residues 1 to 12 (LCVLCLLPQSPA). Residues 13–89 (LPLPREAGGH…PRCGLPDTGE (77 aa)) constitute a propeptide, activation peptide. A Cysteine switch motif is present at residues 80 to 87 (PRCGLPDT). A Zn(2+)-binding site is contributed by Cys-82. Asp-148 lines the Ca(2+) pocket. Positions 158 and 160 each coordinate Zn(2+). Asp-165, Gly-166, Gly-168, and Thr-170 together coordinate Ca(2+). His-173 lines the Zn(2+) pocket. Positions 180, 182, and 184 each coordinate Ca(2+). His-186 contributes to the Zn(2+) binding site. Ca(2+) contacts are provided by Asp-188 and Glu-191. His-209 contacts Zn(2+). Residue Glu-210 is part of the active site. Zn(2+) is bound by residues His-213 and His-219.

The protein belongs to the peptidase M10A family. Ca(2+) serves as cofactor. The cofactor is Zn(2+).

It is found in the secreted. The protein localises to the extracellular space. The protein resides in the extracellular matrix. The catalysed reaction is Cleavage of 14-Ala-|-Leu-15 and 16-Tyr-|-Leu-17 in B chain of insulin. No action on collagen types I, II, IV, V. Cleaves gelatin chain alpha2(I) &gt; alpha1(I).. Functionally, degrades casein, gelatins of types I, III, IV, and V, and fibronectin. Activates procollagenase. The chain is Matrilysin (MMP7) from Felis catus (Cat).